Consider the following 80-residue polypeptide: Protein FAM229B (80 aa).

A disordered region spans residues 1–45; it reads MPFRFGTQPRRFPVEGGDSSIELESGLSSSASCTGKETSPNRQLR. Over residues 15–32 the composition is skewed to low complexity; sequence EGGDSSIELESGLSSSAS. The segment covering 33-42 has biased composition (polar residues); it reads CTGKETSPNR.

The protein belongs to the FAM229 family.

This is Protein FAM229B (Fam229b) from Mus musculus (Mouse).